Consider the following 657-residue polypeptide: UvrABC system protein B (657 aa).

The Helicase ATP-binding domain occupies 23–414 (KSIKKGNKYQ…KENIFHQIMR (392 aa)). 36 to 43 (GVTGSGKT) is an ATP binding site. Residues 89-112 (YYDYYQPEAYIPRTDVFIEKDSST) carry the Beta-hairpin motif. Residues 431 to 593 (QVEILFDEAK…ITPTSVKRHI (163 aa)) form the Helicase C-terminal domain. Residues 622-657 (AKLAKELRKQMLEAAKALEFEKAAAIRDEINKLRDL) enclose the UVR domain.

It belongs to the UvrB family. As to quaternary structure, forms a heterotetramer with UvrA during the search for lesions. Interacts with UvrC in an incision complex.

The protein resides in the cytoplasm. In terms of biological role, the UvrABC repair system catalyzes the recognition and processing of DNA lesions. A damage recognition complex composed of 2 UvrA and 2 UvrB subunits scans DNA for abnormalities. Upon binding of the UvrA(2)B(2) complex to a putative damaged site, the DNA wraps around one UvrB monomer. DNA wrap is dependent on ATP binding by UvrB and probably causes local melting of the DNA helix, facilitating insertion of UvrB beta-hairpin between the DNA strands. Then UvrB probes one DNA strand for the presence of a lesion. If a lesion is found the UvrA subunits dissociate and the UvrB-DNA preincision complex is formed. This complex is subsequently bound by UvrC and the second UvrB is released. If no lesion is found, the DNA wraps around the other UvrB subunit that will check the other stand for damage. In Campylobacter jejuni (strain RM1221), this protein is UvrABC system protein B.